The chain runs to 657 residues: uncharacterized protein (657 aa).

An N-terminal signal peptide occupies residues 1 to 26; sequence MFGKGLVKKSLLFFSGVSTMAVFLVS. Cys-27 is lipidated: N-palmitoyl cysteine. Cys-27 carries the S-diacylglycerol cysteine lipid modification. 3 disordered regions span residues 291–316, 468–496, and 516–563; these read ISPK…FSST, RLSS…DGII, and KSMT…KETN. Residues 294-304 are compositionally biased toward polar residues; sequence KQGSDNNSNLS. Over residues 469-495 the composition is skewed to basic and acidic residues; the sequence is LSSDDTNTKKALKEVSTHKNGSDKDGI. The segment covering 516–525 has biased composition (polar residues); it reads KSMTDNNSGT. Basic and acidic residues predominate over residues 526-545; the sequence is EQKKNLSEVDTKKKEKESKG. Residues 546 to 559 show a composition bias toward low complexity; the sequence is KTQSNGQDSGQQNG.

It to T.pallidum TmpC.

The protein localises to the cell membrane. This is an uncharacterized protein from Mycoplasma pneumoniae (strain ATCC 29342 / M129 / Subtype 1) (Mycoplasmoides pneumoniae).